Reading from the N-terminus, the 51-residue chain is Insulin-2 (51 aa).

3 cysteine pairs are disulfide-bonded: cysteine 8–cysteine 37, cysteine 20–cysteine 50, and cysteine 36–cysteine 41.

It belongs to the insulin family. As to quaternary structure, heterodimer of a B chain and an A chain linked by two disulfide bonds.

It is found in the secreted. Functionally, insulin decreases blood glucose concentration. It increases cell permeability to monosaccharides, amino acids and fatty acids. It accelerates glycolysis, the pentose phosphate cycle, and glycogen synthesis in liver. The polypeptide is Insulin-2 (Katsuwonus pelamis (Skipjack tuna)).